The primary structure comprises 425 residues: Serine--tRNA ligase (425 aa).

Residue 231 to 233 (TAE) participates in L-serine binding. Residues 262–264 (RTE) and Val278 each bind ATP. An L-serine-binding site is contributed by Glu285. ATP is bound at residue 349–352 (EVTS). Thr384 contacts L-serine.

Belongs to the class-II aminoacyl-tRNA synthetase family. Type-1 seryl-tRNA synthetase subfamily. In terms of assembly, homodimer. The tRNA molecule binds across the dimer.

Its subcellular location is the cytoplasm. The enzyme catalyses tRNA(Ser) + L-serine + ATP = L-seryl-tRNA(Ser) + AMP + diphosphate + H(+). It carries out the reaction tRNA(Sec) + L-serine + ATP = L-seryl-tRNA(Sec) + AMP + diphosphate + H(+). Its pathway is aminoacyl-tRNA biosynthesis; selenocysteinyl-tRNA(Sec) biosynthesis; L-seryl-tRNA(Sec) from L-serine and tRNA(Sec): step 1/1. In terms of biological role, catalyzes the attachment of serine to tRNA(Ser). Is also able to aminoacylate tRNA(Sec) with serine, to form the misacylated tRNA L-seryl-tRNA(Sec), which will be further converted into selenocysteinyl-tRNA(Sec). The protein is Serine--tRNA ligase of Dictyoglomus thermophilum (strain ATCC 35947 / DSM 3960 / H-6-12).